Consider the following 800-residue polypeptide: Protocadherin beta-10 (800 aa).

The N-terminal stretch at 1 to 26 (MAVRELCFPRQRQVLFLFLFWGVSLA) is a signal peptide. The Extracellular segment spans residues 27–692 (GSGFGRYSVT…AEADLLTVYL (666 aa)). Cadherin domains lie at 35–133 (VTEE…APVF), 138–242 (TVLK…APQF), 247–347 (YETQ…PPEL), 352–451 (FSNS…APAF), and 456–561 (YTLF…SPFV). Residues asparagine 169 and asparagine 181 are each glycosylated (N-linked (GlcNAc...) asparagine). Residues asparagine 418 and asparagine 436 are each glycosylated (N-linked (GlcNAc...) asparagine). An N-linked (GlcNAc...) asparagine glycan is attached at asparagine 567. Positions 568–671 (GSAPCTELVP…LVDGFSQPYL (104 aa)) constitute a Cadherin 6 domain. Residues 693–713 (VVALASVSSLFLLSVLLFVAV) traverse the membrane as a helical segment. Over 714–800 (RLCRRSRAAS…FRNSFGFNIQ (87 aa)) the chain is Cytoplasmic.

Its subcellular location is the cell membrane. Potential calcium-dependent cell-adhesion protein. May be involved in the establishment and maintenance of specific neuronal connections in the brain. The sequence is that of Protocadherin beta-10 (PCDHB10) from Homo sapiens (Human).